The sequence spans 549 residues: Undecaprenyl phosphate-alpha-4-amino-4-deoxy-L-arabinose arabinosyl transferase (549 aa).

12 helical membrane passes run 9–29 (LLLI…GLWI), 80–100 (LFGV…LAYL), 112–132 (SLAC…SGYA), 136–156 (PQFT…LDAG), 166–186 (ILLG…AWLL), 204–224 (LLGY…PWAL), 256–276 (PWWF…GLLP), 288–308 (QAPV…FSLS), 312–332 (LPTY…HALV), 346–366 (NGLL…YLQL), 376–396 (FELF…LAQW), and 402–422 (AWAA…AAMP).

The protein belongs to the glycosyltransferase 83 family.

It is found in the cell inner membrane. The enzyme catalyses 4-amino-4-deoxy-alpha-L-arabinopyranosyl di-trans,octa-cis-undecaprenyl phosphate + lipid IVA = lipid IIA + di-trans,octa-cis-undecaprenyl phosphate.. The protein operates within lipopolysaccharide metabolism; 4-amino-4-deoxy-beta-L-arabinose-lipid A biosynthesis. Functionally, catalyzes the transfer of the L-Ara4N moiety of the glycolipid undecaprenyl phosphate-alpha-L-Ara4N to lipid A. The modified arabinose is attached to lipid A and is required for resistance to polymyxin and cationic antimicrobial peptides. The polypeptide is Undecaprenyl phosphate-alpha-4-amino-4-deoxy-L-arabinose arabinosyl transferase (Pseudomonas aeruginosa (strain UCBPP-PA14)).